We begin with the raw amino-acid sequence, 482 residues long: Ribosomal RNA small subunit methyltransferase F (482 aa).

S-adenosyl-L-methionine contacts are provided by residues Ala-119 to Lys-125, Glu-143, Asp-170, and Asp-188. The active-site Nucleophile is the Cys-241.

It belongs to the class I-like SAM-binding methyltransferase superfamily. RsmB/NOP family.

Its subcellular location is the cytoplasm. It catalyses the reaction cytidine(1407) in 16S rRNA + S-adenosyl-L-methionine = 5-methylcytidine(1407) in 16S rRNA + S-adenosyl-L-homocysteine + H(+). Specifically methylates the cytosine at position 1407 (m5C1407) of 16S rRNA. The sequence is that of Ribosomal RNA small subunit methyltransferase F from Shewanella sp. (strain ANA-3).